Here is a 668-residue protein sequence, read N- to C-terminus: Fructose-1,6-bisphosphatase class 3 (668 aa).

The protein belongs to the FBPase class 3 family. The cofactor is Mn(2+).

The catalysed reaction is beta-D-fructose 1,6-bisphosphate + H2O = beta-D-fructose 6-phosphate + phosphate. It functions in the pathway carbohydrate biosynthesis; gluconeogenesis. In Clostridium botulinum (strain Kyoto / Type A2), this protein is Fructose-1,6-bisphosphatase class 3.